The sequence spans 26 residues: Toxin TdII-1 (26 aa).

It belongs to the long (4 C-C) scorpion toxin superfamily. Sodium channel inhibitor family. Beta subfamily. In terms of tissue distribution, expressed by the venom gland.

It is found in the secreted. Functionally, beta toxins bind voltage-independently at site-4 of sodium channels (Nav) and shift the voltage of activation toward more negative potentials thereby affecting sodium channel activation and promoting spontaneous and repetitive firing. This toxin is active against mammals and crustaceans. In Tityus discrepans (Venezuelan scorpion), this protein is Toxin TdII-1.